We begin with the raw amino-acid sequence, 96 residues long: Guanyl-specific ribonuclease Sa (96 aa).

Cys7 and Cys96 are oxidised to a cystine. Glu54 serves as the catalytic Proton acceptor. His85 (proton donor) is an active-site residue.

It belongs to the ribonuclease N1/T1 family.

Its subcellular location is the secreted. The enzyme catalyses [RNA] containing guanosine + H2O = an [RNA fragment]-3'-guanosine-3'-phosphate + a 5'-hydroxy-ribonucleotide-3'-[RNA fragment].. This is Guanyl-specific ribonuclease Sa (rnaSA) from Kitasatospora aureofaciens (Streptomyces aureofaciens).